The primary structure comprises 365 residues: U1 snRNP-associated protein usp109 (365 aa).

3 RRM domains span residues 3–79, 86–162, and 189–259; these read TSLW…VVPE, YMLF…SVKS, and TAVY…WARP.

As to quaternary structure, component of the U1 snRNP complex.

The protein localises to the nucleus. The protein is U1 snRNP-associated protein usp109 (usp109) of Schizosaccharomyces pombe (strain 972 / ATCC 24843) (Fission yeast).